A 377-amino-acid chain; its full sequence is 23S rRNA (uracil(747)-C(5))-methyltransferase RlmC (377 aa).

Positions 3, 11, 14, and 87 each coordinate [4Fe-4S] cluster. Glutamine 212, phenylalanine 241, glutamate 262, and asparagine 307 together coordinate S-adenosyl-L-methionine. The active-site Nucleophile is the cysteine 334.

Belongs to the class I-like SAM-binding methyltransferase superfamily. RNA M5U methyltransferase family. RlmC subfamily.

The enzyme catalyses uridine(747) in 23S rRNA + S-adenosyl-L-methionine = 5-methyluridine(747) in 23S rRNA + S-adenosyl-L-homocysteine + H(+). Functionally, catalyzes the formation of 5-methyl-uridine at position 747 (m5U747) in 23S rRNA. This chain is 23S rRNA (uracil(747)-C(5))-methyltransferase RlmC, found in Proteus mirabilis (strain HI4320).